Consider the following 269-residue polypeptide: Tryptophan synthase alpha chain (269 aa).

Catalysis depends on proton acceptor residues Glu49 and Asp60.

The protein belongs to the TrpA family. As to quaternary structure, tetramer of two alpha and two beta chains.

The enzyme catalyses (1S,2R)-1-C-(indol-3-yl)glycerol 3-phosphate + L-serine = D-glyceraldehyde 3-phosphate + L-tryptophan + H2O. It functions in the pathway amino-acid biosynthesis; L-tryptophan biosynthesis; L-tryptophan from chorismate: step 5/5. Functionally, the alpha subunit is responsible for the aldol cleavage of indoleglycerol phosphate to indole and glyceraldehyde 3-phosphate. This is Tryptophan synthase alpha chain from Pseudomonas putida (strain ATCC 700007 / DSM 6899 / JCM 31910 / BCRC 17059 / LMG 24140 / F1).